Here is a 256-residue protein sequence, read N- to C-terminus: MTKITRIVREARDQTRLTALDFAKAIFDDFIQLHGDRSFRDDGAVIGGIGSLDGRPVTVIGIQKGKNLQDNLKRNFGQPHPEGYRKALRLMKQAEKFGRPIVTFINTAGAYPGVGAEERGQGEAIARNLMEMSDLKVPIIAIIIGEGGSGGALALGVANRVWMLENSIYAVLSPEGFASILWKDGSRAMEAAELMKITSHELLQMEIVDKVIEETGLSNQDLITSIKQELLVELEQLSSWSVEELVDQRYQRFRKY.

Residues 1–236 (MTKITRIVRE…KQELLVELEQ (236 aa)) enclose the CoA carboxyltransferase C-terminal domain.

The protein belongs to the AccA family. Acetyl-CoA carboxylase is a heterohexamer composed of biotin carboxyl carrier protein (AccB), biotin carboxylase (AccC) and two subunits each of ACCase subunit alpha (AccA) and ACCase subunit beta (AccD).

It is found in the cytoplasm. The catalysed reaction is N(6)-carboxybiotinyl-L-lysyl-[protein] + acetyl-CoA = N(6)-biotinyl-L-lysyl-[protein] + malonyl-CoA. Its pathway is lipid metabolism; malonyl-CoA biosynthesis; malonyl-CoA from acetyl-CoA: step 1/1. Functionally, component of the acetyl coenzyme A carboxylase (ACC) complex. First, biotin carboxylase catalyzes the carboxylation of biotin on its carrier protein (BCCP) and then the CO(2) group is transferred by the carboxyltransferase to acetyl-CoA to form malonyl-CoA. The sequence is that of Acetyl-coenzyme A carboxylase carboxyl transferase subunit alpha from Streptococcus gordonii (strain Challis / ATCC 35105 / BCRC 15272 / CH1 / DL1 / V288).